Consider the following 277-residue polypeptide: Isoprenyl transferase 1 (277 aa).

Residues 1–30 are disordered; it reads MAVRGILGRQRREYRTPEPHPSGARPPKLG. Residue D42 is part of the active site. Residue D42 participates in Mg(2+) binding. Residues 43–46, W47, R55, H59, and 87–89 each bind substrate; these read GNGR and STE. N90 (proton acceptor) is an active-site residue. Substrate contacts are provided by residues W91, R93, R210, and 216–218; that span reads RTS. E229 is a binding site for Mg(2+).

The protein belongs to the UPP synthase family. Homodimer. Mg(2+) serves as cofactor.

Functionally, catalyzes the condensation of isopentenyl diphosphate (IPP) with allylic pyrophosphates generating different type of terpenoids. This chain is Isoprenyl transferase 1, found in Streptomyces coelicolor (strain ATCC BAA-471 / A3(2) / M145).